A 108-amino-acid chain; its full sequence is Circadian clock oscillator protein KaiB (108 aa).

The protein belongs to the KaiB family. In terms of assembly, may undergo a major conformational rearrangment; in the free state forms homooligomers. When bound to KaiC switches to a monomeric thioredoxin-fold (KaiB(fs)). The active oscillator complex is probably KaiC(6):KaiB(6).

In terms of biological role, component of the KaiBC clock protein complex, which constitutes the main circadian regulator in cyanobacteria; it may modify the ATPase activity of KaiC. Functionally, may be a metamorphic protein which reversibly switches between an inactive tetrameric fold and a rare, thioredoxin-like monomeric fold (KaiB(fs)). KaiB(fs) binds phospho-KaiC, and perhaps clock output effectors. In Prochlorococcus marinus (strain MIT 9515), this protein is Circadian clock oscillator protein KaiB.